We begin with the raw amino-acid sequence, 698 residues long: Polyribonucleotide nucleotidyltransferase (698 aa).

Mg(2+) is bound by residues Asp-487 and Asp-493. The region spanning 555-614 is the KH domain; the sequence is PKIIQIQIDPQKIGDVVGQRGKTINAIIEQTGVKIDINDEGAVSVCGTDKDMMDKAINMI. An S1 motif domain is found at 624–692; it reads GQVFEGKVIS…KMGRISFSIK (69 aa).

The protein belongs to the polyribonucleotide nucleotidyltransferase family. The cofactor is Mg(2+).

The protein resides in the cytoplasm. The enzyme catalyses RNA(n+1) + phosphate = RNA(n) + a ribonucleoside 5'-diphosphate. Involved in mRNA degradation. Catalyzes the phosphorolysis of single-stranded polyribonucleotides processively in the 3'- to 5'-direction. This Lachnoclostridium phytofermentans (strain ATCC 700394 / DSM 18823 / ISDg) (Clostridium phytofermentans) protein is Polyribonucleotide nucleotidyltransferase.